The primary structure comprises 241 residues: Large ribosomal subunit protein uL1 (241 aa).

Belongs to the universal ribosomal protein uL1 family. Part of the 50S ribosomal subunit.

In terms of biological role, binds directly to 23S rRNA. The L1 stalk is quite mobile in the ribosome, and is involved in E site tRNA release. Functionally, protein L1 is also a translational repressor protein, it controls the translation of the L11 operon by binding to its mRNA. In Thermomicrobium roseum (strain ATCC 27502 / DSM 5159 / P-2), this protein is Large ribosomal subunit protein uL1.